Reading from the N-terminus, the 241-residue chain is Tumor necrosis factor receptor superfamily member 18 (241 aa).

An N-terminal signal peptide occupies residues 1-25 (MAQHGAMGAFRALCGLALLCALSLG). The Extracellular portion of the chain corresponds to 26 to 162 (QRPTGGPGCG…CVPGSPPAEP (137 aa)). 5 disulfides stabilise this stretch: C34/C49, C74/C86, C81/C94, C115/C134, and C128/C153. TNFR-Cys repeat units follow at residues 34–72 (CGPG…EWDC), 74–112 (CVQP…GFQC), and 115–153 (CASG…NAVC). N146 carries N-linked (GlcNAc...) asparagine glycosylation. A helical transmembrane segment spans residues 163–183 (LGWLTVVLLAVAACVLLLTSA). At 184–241 (QLGLHIWQLRSQCMWPRETQLLLEVPPSTEDARSCQFPEEERGERSAEEKGRLGDLWV) the chain is on the cytoplasmic side. Positions 214 to 241 (DARSCQFPEEERGERSAEEKGRLGDLWV) are disordered. Positions 222 to 241 (EEERGERSAEEKGRLGDLWV) are enriched in basic and acidic residues.

Binds to TRAF1, TRAF2, and TRAF3, but not TRAF5 and TRAF6. Binds through its C-terminus to SIVA1/SIVA. As to expression, expressed in lymph node, peripheral blood leukocytes and weakly in spleen.

The protein resides in the cell membrane. The protein localises to the secreted. Its function is as follows. Receptor for TNFSF18. Seems to be involved in interactions between activated T-lymphocytes and endothelial cells and in the regulation of T-cell receptor-mediated cell death. Mediated NF-kappa-B activation via the TRAF2/NIK pathway. The chain is Tumor necrosis factor receptor superfamily member 18 (TNFRSF18) from Homo sapiens (Human).